The primary structure comprises 218 residues: MSENEIKGILGTKLGMTQVFDEENRVVPVTVVEAGPCVVTQIRTKETDGYNAIQIAFGEKDPRKVNKPATGHFKKAGVTPRRYVAEIRMDDTSAYEVGQEVKVDIFEGVSFVDVTGTTKGHGYAGAMKRHGFAGQGAAHGNQAAHRRVGGIGGASFPGRVFKGKRMAGRMGQDRVTTQNLKIQKIDAESNLLLIKGAIPGARGGLVTVKTAVKGGAHA.

This sequence belongs to the universal ribosomal protein uL3 family. Part of the 50S ribosomal subunit. Forms a cluster with proteins L14 and L19.

In terms of biological role, one of the primary rRNA binding proteins, it binds directly near the 3'-end of the 23S rRNA, where it nucleates assembly of the 50S subunit. This Corynebacterium aurimucosum (strain ATCC 700975 / DSM 44827 / CIP 107346 / CN-1) (Corynebacterium nigricans) protein is Large ribosomal subunit protein uL3.